Consider the following 488-residue polypeptide: Ankyrin repeat domain-containing protein 13C (488 aa).

The tract at residues 1-60 (MTGEKIRSVRKERKSGLDLLEPDEEPAATGPAKHRGSKIFSGGNHRISRSSSSPGDPDGA) is disordered. Positions 41-59 (SGGNHRISRSSSSPGDPDG) are enriched in low complexity. 3 ANK repeats span residues 58-87 (DGAY…IAQK), 90-119 (HGNT…PVKV), and 123-152 (QGWS…QQSR).

The protein localises to the endoplasmic reticulum membrane. In terms of biological role, acts as a molecular chaperone for G protein-coupled receptors, regulating their biogenesis and exit from the ER. In Danio rerio (Zebrafish), this protein is Ankyrin repeat domain-containing protein 13C (ankrd13c).